Consider the following 90-residue polypeptide: DNA-directed RNA polymerase subunit omega (90 aa).

Belongs to the RNA polymerase subunit omega family. As to quaternary structure, the RNAP catalytic core consists of 2 alpha, 1 beta, 1 beta' and 1 omega subunit. When a sigma factor is associated with the core the holoenzyme is formed, which can initiate transcription.

It carries out the reaction RNA(n) + a ribonucleoside 5'-triphosphate = RNA(n+1) + diphosphate. Its function is as follows. Promotes RNA polymerase assembly. Latches the N- and C-terminal regions of the beta' subunit thereby facilitating its interaction with the beta and alpha subunits. This chain is DNA-directed RNA polymerase subunit omega, found in Hamiltonella defensa subsp. Acyrthosiphon pisum (strain 5AT).